Consider the following 704-residue polypeptide: Ion-translocating oxidoreductase complex subunit C (704 aa).

4Fe-4S ferredoxin-type domains are found at residues 368–397 and 407–436; these read MGAP…QQLY and KATA…VQYF. Positions 377, 380, 383, 387, 416, 419, 422, and 426 each coordinate [4Fe-4S] cluster. A disordered region spans residues 535 to 684; it reads ARAKQAAHPM…PADPRKAAVA (150 aa). Residues 556 to 565 are compositionally biased toward low complexity; sequence KAAVEAAIAR.

This sequence belongs to the 4Fe4S bacterial-type ferredoxin family. RnfC subfamily. In terms of assembly, the complex is composed of six subunits: RsxA, RsxB, RsxC, RsxD, RsxE and RsxG. It depends on [4Fe-4S] cluster as a cofactor.

It is found in the cell inner membrane. In terms of biological role, part of a membrane-bound complex that couples electron transfer with translocation of ions across the membrane. Required to maintain the reduced state of SoxR. This is Ion-translocating oxidoreductase complex subunit C from Salmonella paratyphi C (strain RKS4594).